The following is a 169-amino-acid chain: Glycine-rich RNA-binding protein 8 (169 aa).

Positions 6 to 84 (YRCFVGGLAW…RVITVNEAQS (79 aa)) constitute an RRM domain. An ADP-ribosylarginine; by HopU1 modification is found at Arg-47. The disordered stretch occupies residues 80 to 99 (NEAQSRGSGGGGGGRGGSGG). Over residues 86 to 99 (GSGGGGGGRGGSGG) the composition is skewed to gly residues. The segment at 86–168 (GSGGGGGGRG…GGSYGGGGGG (83 aa)) is glycine-rich (GR) required for cell-to-cell movement. The segment at 95-143 (GGSGGGYRSGGGGGYSGGGGGGYSGGGGGGYERRSGGYGSGGGGGGRGY) is nuclear targeting sequence (M9). Position 103 is a phosphoserine (Ser-103). The segment at 130–169 (GGYGSGGGGGGRGYGGGGRREGGGYGGGDGGSYGGGGGGW) is disordered.

This sequence belongs to the GR-RBP family. As to quaternary structure, interacts with TRN1. Binds to small phloem-mobile single-stranded RNAs (ss-sRNA, e.g. small interfering RNA (siRNA) and microRNA (miRNA)) in the phloeme exudate, including viral-derived sRNA (vsiRNA). Post-translationally, ADP-ribosylated by the Pseudomonas syringae type III effector HopU1. ADP-ribosylation reduces the ability of the protein to bind RNA. As to expression, ubiquitous.

The protein localises to the cytoplasm. The protein resides in the nucleus. It localises to the secreted. Plays a role in RNA transcription or processing during stress. Binds RNAs and DNAs sequence with a preference to single-stranded nucleic acids. Involved in mRNA alternative splicing of numerous targets by modulating splice site selection. Negatively regulates the circadian oscillations of its own transcript as well as RBG7 transcript. Forms an interlocked post-transcriptional negative feedback loop with the RBG7 autoregulatory circuit. Both proteins negatively autoregulate and reciprocally crossregulate by binding to their pre-mRNAs and promoting unproductive splicing coupled to degradation via the NMD pathway. Target of the Pseudomonas syringae type III effector HopU1. Mediates cell-to-cell trafficking of RNA interference (RNAi) signals (small RNAs (sRNA), e.g. small interfering RNA (siRNA) and microRNA (miRNA)) which regulate growth and development, as well as responses to environmental inputs, including pathogen attack; can compromise zucchini yellow mosaic virus (ZYMV) and tobacco rattle virus (TRV) infections at the early stage. This is Glycine-rich RNA-binding protein 8 from Arabidopsis thaliana (Mouse-ear cress).